A 334-amino-acid polypeptide reads, in one-letter code: Holliday junction branch migration complex subunit RuvB (334 aa).

The interval Ala-4–Tyr-184 is large ATPase domain (RuvB-L). Residues Ile-23, Arg-24, Gly-65, Lys-68, Thr-69, Thr-70, Glu-131 to Tyr-133, Arg-174, Tyr-184, and Arg-221 contribute to the ATP site. Thr-69 is a Mg(2+) binding site. Residues Gln-185–Asn-255 are small ATPAse domain (RuvB-S). The tract at residues Ala-258–Glu-334 is head domain (RuvB-H). Arg-294, Arg-313, and Arg-318 together coordinate DNA.

The protein belongs to the RuvB family. In terms of assembly, homohexamer. Forms an RuvA(8)-RuvB(12)-Holliday junction (HJ) complex. HJ DNA is sandwiched between 2 RuvA tetramers; dsDNA enters through RuvA and exits via RuvB. An RuvB hexamer assembles on each DNA strand where it exits the tetramer. Each RuvB hexamer is contacted by two RuvA subunits (via domain III) on 2 adjacent RuvB subunits; this complex drives branch migration. In the full resolvosome a probable DNA-RuvA(4)-RuvB(12)-RuvC(2) complex forms which resolves the HJ.

Its subcellular location is the cytoplasm. The catalysed reaction is ATP + H2O = ADP + phosphate + H(+). Its function is as follows. The RuvA-RuvB-RuvC complex processes Holliday junction (HJ) DNA during genetic recombination and DNA repair, while the RuvA-RuvB complex plays an important role in the rescue of blocked DNA replication forks via replication fork reversal (RFR). RuvA specifically binds to HJ cruciform DNA, conferring on it an open structure. The RuvB hexamer acts as an ATP-dependent pump, pulling dsDNA into and through the RuvAB complex. RuvB forms 2 homohexamers on either side of HJ DNA bound by 1 or 2 RuvA tetramers; 4 subunits per hexamer contact DNA at a time. Coordinated motions by a converter formed by DNA-disengaged RuvB subunits stimulates ATP hydrolysis and nucleotide exchange. Immobilization of the converter enables RuvB to convert the ATP-contained energy into a lever motion, pulling 2 nucleotides of DNA out of the RuvA tetramer per ATP hydrolyzed, thus driving DNA branch migration. The RuvB motors rotate together with the DNA substrate, which together with the progressing nucleotide cycle form the mechanistic basis for DNA recombination by continuous HJ branch migration. Branch migration allows RuvC to scan DNA until it finds its consensus sequence, where it cleaves and resolves cruciform DNA. The polypeptide is Holliday junction branch migration complex subunit RuvB (Serratia proteamaculans (strain 568)).